A 207-amino-acid polypeptide reads, in one-letter code: MTETDGQKDNNQDTAQAAADPVVSKPYIMPDDPEEGSNEALVREAADARDKMLRTLAEMENLRKRTQKEVADARTYGVTSFARDVLDIADNLQRALDAVPAEARANAEPGLKALIEGVELTERSLLNALEKNGVKKFDPKGQKFDPNFQQAMYEVPDPSVPAGTVVQVVQAGFTIGDRVLRPALVGVAKGGAKAAPSDGGSETGNLN.

The segment covering 1 to 11 (MTETDGQKDNN) has biased composition (basic and acidic residues). Residues 1 to 39 (MTETDGQKDNNQDTAQAAADPVVSKPYIMPDDPEEGSNE) form a disordered region.

The protein belongs to the GrpE family. As to quaternary structure, homodimer.

It localises to the cytoplasm. Participates actively in the response to hyperosmotic and heat shock by preventing the aggregation of stress-denatured proteins, in association with DnaK and GrpE. It is the nucleotide exchange factor for DnaK and may function as a thermosensor. Unfolded proteins bind initially to DnaJ; upon interaction with the DnaJ-bound protein, DnaK hydrolyzes its bound ATP, resulting in the formation of a stable complex. GrpE releases ADP from DnaK; ATP binding to DnaK triggers the release of the substrate protein, thus completing the reaction cycle. Several rounds of ATP-dependent interactions between DnaJ, DnaK and GrpE are required for fully efficient folding. In Rhodopseudomonas palustris (strain TIE-1), this protein is Protein GrpE.